Consider the following 399-residue polypeptide: Enolase (399 aa).

Residue Q149 coordinates (2R)-2-phosphoglycerate. The active-site Proton donor is the E191. Positions 227, 268, and 293 each coordinate Mg(2+). K318, R347, S348, and K369 together coordinate (2R)-2-phosphoglycerate. K318 acts as the Proton acceptor in catalysis.

Belongs to the enolase family. Mg(2+) serves as cofactor.

It localises to the cytoplasm. Its subcellular location is the secreted. The protein localises to the cell surface. It catalyses the reaction (2R)-2-phosphoglycerate = phosphoenolpyruvate + H2O. Its pathway is carbohydrate degradation; glycolysis; pyruvate from D-glyceraldehyde 3-phosphate: step 4/5. Its function is as follows. Catalyzes the reversible conversion of 2-phosphoglycerate (2-PG) into phosphoenolpyruvate (PEP). It is essential for the degradation of carbohydrates via glycolysis. The sequence is that of Enolase from Archaeoglobus fulgidus (strain ATCC 49558 / DSM 4304 / JCM 9628 / NBRC 100126 / VC-16).